The sequence spans 195 residues: Shikimate kinase (195 aa).

33–38 (GAGKTT) contributes to the ATP binding site. Thr-37 contacts Mg(2+). Residues Asp-55, Arg-79, and Gly-101 each coordinate substrate. Arg-139 provides a ligand contact to ATP. Position 158 (Arg-158) interacts with substrate. Arg-175 contacts ATP.

Belongs to the shikimate kinase family. In terms of assembly, monomer. It depends on Mg(2+) as a cofactor.

It is found in the cytoplasm. The enzyme catalyses shikimate + ATP = 3-phosphoshikimate + ADP + H(+). The protein operates within metabolic intermediate biosynthesis; chorismate biosynthesis; chorismate from D-erythrose 4-phosphate and phosphoenolpyruvate: step 5/7. Its function is as follows. Catalyzes the specific phosphorylation of the 3-hydroxyl group of shikimic acid using ATP as a cosubstrate. This Nitrosospira multiformis (strain ATCC 25196 / NCIMB 11849 / C 71) protein is Shikimate kinase.